Here is a 160-residue protein sequence, read N- to C-terminus: Ribosome maturation factor RimP (160 aa).

The protein belongs to the RimP family.

The protein localises to the cytoplasm. In terms of biological role, required for maturation of 30S ribosomal subunits. This is Ribosome maturation factor RimP from Symbiobacterium thermophilum (strain DSM 24528 / JCM 14929 / IAM 14863 / T).